A 194-amino-acid chain; its full sequence is Imidazoleglycerol-phosphate dehydratase (194 aa).

The protein belongs to the imidazoleglycerol-phosphate dehydratase family.

Its subcellular location is the cytoplasm. The catalysed reaction is D-erythro-1-(imidazol-4-yl)glycerol 3-phosphate = 3-(imidazol-4-yl)-2-oxopropyl phosphate + H2O. The protein operates within amino-acid biosynthesis; L-histidine biosynthesis; L-histidine from 5-phospho-alpha-D-ribose 1-diphosphate: step 6/9. The polypeptide is Imidazoleglycerol-phosphate dehydratase (Listeria innocua serovar 6a (strain ATCC BAA-680 / CLIP 11262)).